A 325-amino-acid chain; its full sequence is Probable cell division protein WhiA (325 aa).

The segment at residues 280–313 is a DNA-binding region (H-T-H motif); it reads SLKELGNMLEKPLGKSGVNHRLRKIDKIAEELRK.

Belongs to the WhiA family.

Involved in cell division and chromosome segregation. The sequence is that of Probable cell division protein WhiA from Caldicellulosiruptor bescii (strain ATCC BAA-1888 / DSM 6725 / KCTC 15123 / Z-1320) (Anaerocellum thermophilum).